The primary structure comprises 146 residues: D-aminoacyl-tRNA deacylase (146 aa).

The Gly-cisPro motif, important for rejection of L-amino acids motif lies at 138–139; sequence GP.

It belongs to the DTD family. As to quaternary structure, homodimer.

The protein localises to the cytoplasm. The enzyme catalyses glycyl-tRNA(Ala) + H2O = tRNA(Ala) + glycine + H(+). The catalysed reaction is a D-aminoacyl-tRNA + H2O = a tRNA + a D-alpha-amino acid + H(+). Its function is as follows. An aminoacyl-tRNA editing enzyme that deacylates mischarged D-aminoacyl-tRNAs. Also deacylates mischarged glycyl-tRNA(Ala), protecting cells against glycine mischarging by AlaRS. Acts via tRNA-based rather than protein-based catalysis; rejects L-amino acids rather than detecting D-amino acids in the active site. By recycling D-aminoacyl-tRNA to D-amino acids and free tRNA molecules, this enzyme counteracts the toxicity associated with the formation of D-aminoacyl-tRNA entities in vivo and helps enforce protein L-homochirality. The sequence is that of D-aminoacyl-tRNA deacylase from Xanthomonas axonopodis pv. citri (strain 306).